The primary structure comprises 266 residues: MSEQEVTFPTMRFHKSSGLNSQVRLEGTQRSRKAGLRVCSVPWQLIVIALGILCSLRLVIVAVFVTKFFQYSQHKQEINETLNHRHNCSNMQRDFNLKEEMLTNKSIDCRPSYELLEYIKREQERWDSETKSVSDSSRDTGRGVKYWFCYGTKCYYFIMNKTTWSGCKANCQHYSVPIVKIEDEDELKFLQRHVILESYWIGLSYDKKKKEWAWIHNGQSKLDMKIKKMNFTSRGCVFLSKARIEDTDCNTPYYCICGKKLDKFPD.

Residues 1-44 (MSEQEVTFPTMRFHKSSGLNSQVRLEGTQRSRKAGLRVCSVPWQ) are Cytoplasmic-facing. A helical; Signal-anchor for type II membrane protein membrane pass occupies residues 45–66 (LIVIALGILCSLRLVIVAVFVT). Residues 67–266 (KFFQYSQHKQ…CGKKLDKFPD (200 aa)) lie on the Extracellular side of the membrane. Asn-87 and Asn-104 each carry an N-linked (GlcNAc...) asparagine glycan. The C-type lectin domain occupies 143 to 261 (GVKYWFCYGT…PYYCICGKKL (119 aa)). 4 disulfides stabilise this stretch: Cys-149–Cys-154, Cys-167–Cys-255, Cys-171–Cys-257, and Cys-236–Cys-249.

In terms of assembly, homodimer; disulfide-linked. Interacts with the adapter protein TYROBP/DAP12; the interaction leads to natural killer cell activation.

The protein localises to the cell membrane. In terms of biological role, receptor on natural killer (NK) cells for class I MHC. This chain is Killer cell lectin-like receptor 8 (Klra8), found in Mus musculus (Mouse).